The primary structure comprises 92 residues: Long neurotoxin 1 (92 aa).

The first 21 residues, 1 to 21 (MKTLLLTLVVVTIVCLDLGYT), serve as a signal peptide directing secretion. 4 cysteine pairs are disulfide-bonded: Cys-24-Cys-42, Cys-35-Cys-63, Cys-67-Cys-79, and Cys-80-Cys-85.

The protein belongs to the three-finger toxin family. Long-chain subfamily. Type II alpha-neurotoxin sub-subfamily. As to expression, expressed by the venom gland.

It localises to the secreted. Functionally, binds with high affinity to muscular (alpha-1/CHRNA1) and neuronal (alpha-7/CHRNA7) nicotinic acetylcholine receptor (nAChR) and inhibits acetylcholine from binding to the receptor, thereby impairing neuromuscular and neuronal transmission. In Oxyuranus scutellatus scutellatus (Australian taipan), this protein is Long neurotoxin 1.